We begin with the raw amino-acid sequence, 336 residues long: Heterogeneous nuclear rnp K-like protein 2 (336 aa).

KH domains lie at Ser17–Ile81, Ile139–Ile204, and Glu248–Leu316.

Belongs to the HEK2 family. Binds RNA.

Its subcellular location is the cytoplasm. It localises to the P-body. It is found in the nucleus. The protein resides in the chromosome. The protein localises to the telomere. Functionally, RNA-binding protein involved in the correct localization of transcripts in the cell. RNA localization is a widespread mechanism for achieving localized protein synthesis. Involved in structural and functional organization of telomeric chromatin and regulates silencing at the HMR locus. The polypeptide is Heterogeneous nuclear rnp K-like protein 2 (HEK2) (Vanderwaltozyma polyspora (strain ATCC 22028 / DSM 70294 / BCRC 21397 / CBS 2163 / NBRC 10782 / NRRL Y-8283 / UCD 57-17) (Kluyveromyces polysporus)).